We begin with the raw amino-acid sequence, 324 residues long: Nidogen-1 (324 aa).

The region spanning 16–178 is the NIDO domain; that stretch reads PFLADLDTTD…GVWVFEIGSP (163 aa). Asparagine 97 is a glycosylation site (N-linked (GlcNAc...) asparagine). Tyrosine 200 and tyrosine 205 each carry sulfotyrosine. Positions 219-259 are disordered; it reads TQPFPSHSPRRGYPDPHNVPRTLAPSYEATERPHGIPTERT. The segment covering 247–259 has biased composition (basic and acidic residues); the sequence is ATERPHGIPTERT. The region spanning 295–324 is the EGF-like domain; it reads SQQTCANNRHQCSVHAECRDYATGFCCRCV. 2 disulfide bridges follow: cysteine 299-cysteine 312 and cysteine 306-cysteine 321.

In terms of assembly, interacts with FBLN1. Interacts with LGALS3BP. Interacts with PLXDC1. Interacts with SVEP1. In terms of processing, N- and O-glycosylated.

It localises to the secreted. It is found in the extracellular space. The protein resides in the extracellular matrix. The protein localises to the basement membrane. Sulfated glycoprotein widely distributed in basement membranes and tightly associated with laminin. Also binds to collagen IV and perlecan. It probably has a role in cell-extracellular matrix interactions. This Rattus norvegicus (Rat) protein is Nidogen-1 (Nid1).